The chain runs to 161 residues: Peptidyl-prolyl cis-trans isomerase-like 1 (161 aa).

In terms of domain architecture, PPIase cyclophilin-type spans 1-155; the sequence is MATDVVFDTS…DEVKIIRAKV (155 aa).

Belongs to the cyclophilin-type PPIase family. PPIL1 subfamily.

The enzyme catalyses [protein]-peptidylproline (omega=180) = [protein]-peptidylproline (omega=0). Its function is as follows. PPIases accelerate the folding of proteins. It catalyzes the cis-trans isomerization of proline imidic peptide bonds in oligopeptides. The chain is Peptidyl-prolyl cis-trans isomerase-like 1 (cyp1) from Aspergillus fumigatus (strain ATCC MYA-4609 / CBS 101355 / FGSC A1100 / Af293) (Neosartorya fumigata).